The primary structure comprises 523 residues: GMP synthase [glutamine-hydrolyzing] (523 aa).

The Glutamine amidotransferase type-1 domain maps to 8-205 (KILILDFGSQ…VVNICGCETK (198 aa)). Catalysis depends on Cys85, which acts as the Nucleophile. Residues His179 and Glu181 contribute to the active site. Residues 206–398 (WTAENIIEDA…LGLPAEMINR (193 aa)) enclose the GMPS ATP-PPase domain. Residue 233 to 239 (SGGVDSS) coordinates ATP.

As to quaternary structure, homodimer.

The catalysed reaction is XMP + L-glutamine + ATP + H2O = GMP + L-glutamate + AMP + diphosphate + 2 H(+). It functions in the pathway purine metabolism; GMP biosynthesis; GMP from XMP (L-Gln route): step 1/1. Catalyzes the synthesis of GMP from XMP. This Haemophilus influenzae (strain PittEE) protein is GMP synthase [glutamine-hydrolyzing].